Consider the following 191-residue polypeptide: Calcium-activated potassium channel subunit beta-1 (191 aa).

Over 1 to 15 the chain is Cytoplasmic; the sequence is MGKKLVMAQKRGETR. The helical transmembrane segment at 16-36 threads the bilayer; the sequence is ALCLGVAMVMCAVITYYILGT. The Extracellular portion of the chain corresponds to 37 to 157; sequence TMLPLYQKSV…YQRLYGPQAL (121 aa). 2 N-linked (GlcNAc...) asparagine glycosylation sites follow: asparagine 80 and asparagine 142. The chain crosses the membrane as a helical span at residues 158–178; it reads LASLFWPTFLLTGGLLIIAMV. Residues 179–191 lie on the Cytoplasmic side of the membrane; it reads KINRSLSILAAQK.

Belongs to the KCNMB (TC 8.A.14.1) family. KCNMB1 subfamily. Interacts with KCNMA1 tetramer. There are probably 4 molecules of KCMNB1 per KCNMA1 tetramer. In terms of processing, N-glycosylated.

Its subcellular location is the membrane. Regulatory subunit of the calcium activated potassium KCNMA1 (maxiK) channel. Modulates the calcium sensitivity and gating kinetics of KCNMA1, thereby contributing to KCNMA1 channel diversity. Increases the apparent Ca(2+)/voltage sensitivity of the KCNMA1 channel. It also modifies KCNMA1 channel kinetics and alters its pharmacological properties. It slows down the activation and the deactivation kinetics of the channel. Acts as a negative regulator of smooth muscle contraction by enhancing the calcium sensitivity to KCNMA1. Its presence is also a requirement for internal binding of the KCNMA1 channel opener dehydrosoyasaponin I (DHS-1) triterpene glycoside and for external binding of the agonist hormone 17-beta-estradiol (E2). Increases the binding activity of charybdotoxin (CTX) toxin to KCNMA1 peptide blocker by increasing the CTX association rate and decreasing the dissociation rate. This Oryctolagus cuniculus (Rabbit) protein is Calcium-activated potassium channel subunit beta-1 (KCNMB1).